We begin with the raw amino-acid sequence, 259 residues long: Adenylate kinase (259 aa).

52 to 57 (GAGKGT) contacts ATP. The NMP stretch occupies residues 72 to 101 (ATGDMLRSQVAKKTDLGREAKKIMDQGGLV). AMP is bound by residues Thr-73, Arg-78, 99-101 (GLV), 128-131 (GFPR), and Gln-135. The LID stretch occupies residues 169–206 (GRLVHPASGRSYHKIFNPPKEAMKDDITGEPLVQRSDD). ATP is bound by residues Arg-170 and 179–180 (SY). AMP is bound by residues Arg-203 and Arg-214. Gln-242 lines the ATP pocket.

It belongs to the adenylate kinase family. AK2 subfamily. Monomer.

It is found in the cytoplasm. The protein resides in the mitochondrion intermembrane space. It carries out the reaction AMP + ATP = 2 ADP. In terms of biological role, catalyzes the reversible transfer of the terminal phosphate group between ATP and AMP. Plays an important role in cellular energy homeostasis and in adenine nucleotide metabolism. Adenylate kinase activity is critical for regulation of the phosphate utilization and the AMP de novo biosynthesis pathways. The polypeptide is Adenylate kinase (adk1) (Emericella nidulans (strain FGSC A4 / ATCC 38163 / CBS 112.46 / NRRL 194 / M139) (Aspergillus nidulans)).